Reading from the N-terminus, the 473-residue chain is Bifunctional protein GlmU (473 aa).

Residues 1-241 (MATQPTPLTA…VGSLVGINDR (241 aa)) are pyrophosphorylase. UDP-N-acetyl-alpha-D-glucosamine-binding positions include 13–16 (LAAG), Lys27, Gln84, and 89–90 (GT). Asp114 is a Mg(2+) binding site. Gly152, Glu167, Asn182, and Asn239 together coordinate UDP-N-acetyl-alpha-D-glucosamine. Asn239 contacts Mg(2+). The linker stretch occupies residues 242 to 262 (AQLAAAEEVLYGRIADRLRKS). Positions 263 to 473 (GVTIRTSARI…KARLKDAAKK (211 aa)) are N-acetyltransferase. UDP-N-acetyl-alpha-D-glucosamine contacts are provided by Arg343 and Lys361. His373 functions as the Proton acceptor in the catalytic mechanism. UDP-N-acetyl-alpha-D-glucosamine is bound by residues Tyr376 and Asn387. Acetyl-CoA contacts are provided by residues Ala390, 396-397 (NY), Ser415, Thr433, and Arg450.

This sequence in the N-terminal section; belongs to the N-acetylglucosamine-1-phosphate uridyltransferase family. It in the C-terminal section; belongs to the transferase hexapeptide repeat family. Homotrimer. Mg(2+) is required as a cofactor.

The protein resides in the cytoplasm. The catalysed reaction is alpha-D-glucosamine 1-phosphate + acetyl-CoA = N-acetyl-alpha-D-glucosamine 1-phosphate + CoA + H(+). It carries out the reaction N-acetyl-alpha-D-glucosamine 1-phosphate + UTP + H(+) = UDP-N-acetyl-alpha-D-glucosamine + diphosphate. It functions in the pathway nucleotide-sugar biosynthesis; UDP-N-acetyl-alpha-D-glucosamine biosynthesis; N-acetyl-alpha-D-glucosamine 1-phosphate from alpha-D-glucosamine 6-phosphate (route II): step 2/2. The protein operates within nucleotide-sugar biosynthesis; UDP-N-acetyl-alpha-D-glucosamine biosynthesis; UDP-N-acetyl-alpha-D-glucosamine from N-acetyl-alpha-D-glucosamine 1-phosphate: step 1/1. It participates in bacterial outer membrane biogenesis; LPS lipid A biosynthesis. Its function is as follows. Catalyzes the last two sequential reactions in the de novo biosynthetic pathway for UDP-N-acetylglucosamine (UDP-GlcNAc). The C-terminal domain catalyzes the transfer of acetyl group from acetyl coenzyme A to glucosamine-1-phosphate (GlcN-1-P) to produce N-acetylglucosamine-1-phosphate (GlcNAc-1-P), which is converted into UDP-GlcNAc by the transfer of uridine 5-monophosphate (from uridine 5-triphosphate), a reaction catalyzed by the N-terminal domain. This chain is Bifunctional protein GlmU, found in Sorangium cellulosum (strain So ce56) (Polyangium cellulosum (strain So ce56)).